The sequence spans 1046 residues: Phospholipase D zeta 2 (1046 aa).

The region spanning 45 to 205 (PKAAIVSVSR…KEVCKFLEVS (161 aa)) is the PX domain. Positions 215-343 (SKMKEGYVTV…WVKAVDEAGC (129 aa)) constitute a PH domain. Residues 472–499 (YLWSHHEKIVIVDYQVCFIGGLDLCFGR) form the PLD phosphodiesterase 1 domain. Residues H477, K479, and D484 contribute to the active site. Residues 653 to 667 (GRGDLKLDSGARQDP) show a composition bias toward basic and acidic residues. The segment at 653–677 (GRGDLKLDSGARQDPGETSEESDLD) is disordered. Residues 847-874 (SQIYVHSKLMIVDDRIAVIGSSNINDRS) enclose the PLD phosphodiesterase 2 domain. Active-site residues include H852, K854, and D859.

Belongs to the phospholipase D family. PXPH-PLD subfamily. Does not require Ca(2+) or any other cation for activity. is required as a cofactor. As to expression, expressed in seedlings, roots, leaves, stems and flowers. Highest expression in roots. Detected only in the meristematic regions up to 4 days after germination and then at later stages in all tissues.

It catalyses the reaction a 1,2-diacyl-sn-glycero-3-phosphocholine + H2O = a 1,2-diacyl-sn-glycero-3-phosphate + choline + H(+). Its function is as follows. Hydrolyzes glycerol-phospholipids at the terminal phosphodiesteric bond to generate phosphatidic acids (PA). Phosphatidylcholine-selective. Regulates vesicle trafficking and auxin responses. Required for the normal cycling of PIN-2 containing vesicles. Contributes to the supply of inorganic phosphorus for cell metabolism and diacylglycerol moieties for galactolipid synthesis in phosphorus-starved roots. Involved in root elongation during phosphate limitation. The protein is Phospholipase D zeta 2 of Arabidopsis thaliana (Mouse-ear cress).